Here is a 41-residue protein sequence, read N- to C-terminus: U-AITX-Bg1a (41 aa).

3 disulfide bridges follow: cysteine 2–cysteine 35, cysteine 4–cysteine 28, and cysteine 18–cysteine 36.

It belongs to the sea anemone type 3 (BDS) potassium channel toxin family.

Its subcellular location is the secreted. The protein localises to the nematocyst. Potently and selectively inhibits voltage-gated potassium channels Kv11/KCNH/ERG. Acts as a gating-modifier toxin that shifts the voltage-dependence of ERG activation in the positive direction and suppresses its current amplitudes elicited by strong depolarizing pulses that maximally activate the channels. This Bunodosoma granuliferum (Red warty sea anemone) protein is U-AITX-Bg1a.